The following is a 137-amino-acid chain: Large ribosomal subunit protein uL22 (137 aa).

Belongs to the universal ribosomal protein uL22 family. In terms of assembly, part of the 50S ribosomal subunit.

This protein binds specifically to 23S rRNA; its binding is stimulated by other ribosomal proteins, e.g. L4, L17, and L20. It is important during the early stages of 50S assembly. It makes multiple contacts with different domains of the 23S rRNA in the assembled 50S subunit and ribosome. Its function is as follows. The globular domain of the protein is located near the polypeptide exit tunnel on the outside of the subunit, while an extended beta-hairpin is found that lines the wall of the exit tunnel in the center of the 70S ribosome. The polypeptide is Large ribosomal subunit protein uL22 (Flavobacterium psychrophilum (strain ATCC 49511 / DSM 21280 / CIP 103535 / JIP02/86)).